Here is a 382-residue protein sequence, read N- to C-terminus: Sphingosine 1-phosphate receptor 1 (382 aa).

The Extracellular segment spans residues 1 to 46; that stretch reads MGSTRIPLVKALHSPVSDYVNYDIIVRHYNYTGKLKISADKDNGIK. An N6-acetyllysine modification is found at K10. An N-linked (GlcNAc...) asparagine glycan is attached at N30. A helical transmembrane segment spans residues 47–68; sequence LISVVFILICCFIILENIFVLL. Over 69–82 the chain is Cytoplasmic; that stretch reads TIWKTKKFHRPMYY. Residues 83–104 traverse the membrane as a helical segment; that stretch reads FIGNLALSDLLAGVAYTANLLL. Topologically, residues 105 to 116 are extracellular; that stretch reads SGATTYKLTPAQ. Residues 117-138 form a helical membrane-spanning segment; that stretch reads WFLREGSMFVALSASVFSLLAI. 120 to 121 serves as a coordination point for sphing-4-enine 1-phosphate; sequence RE. The Cytoplasmic portion of the chain corresponds to 139–160; sequence AIERYITMLKMKLHNGSNRFRS. A helical transmembrane segment spans residues 161 to 182; that stretch reads FLLISACWVISLILGGLPIMGW. Topologically, residues 183–196 are extracellular; sequence NCISTLPSCSTVLP. C184 and C191 form a disulfide bridge. The helical transmembrane segment at 197–224 threads the bilayer; it reads LYHKHYILFCTTVFTLLLLSIVILYCRI. The Cytoplasmic segment spans residues 225–257; sequence YSLVRTRSRRLTFRKNISKASRSSEKSLALLKT. Residue T236 is modified to Phosphothreonine; by PKB/AKT1. The chain crosses the membrane as a helical span at residues 258–278; it reads VIIVLGVFIACWAPLFILLLL. 265-269 serves as a coordination point for sphing-4-enine 1-phosphate; sequence FIACW. Over 279-289 the chain is Extracellular; it reads DVGCKVKTCDI. An intrachain disulfide couples C282 to C287. Residues 290-310 traverse the membrane as a helical segment; the sequence is LFRTEYFLVLAVLNSGTNPII. Topologically, residues 311–382 are cytoplasmic; it reads YTLSNKEMRR…MSSGNVNSSS (72 aa). C328 carries the S-palmitoyl cysteine lipid modification. Residues 349 to 382 are disordered; it reads EFSRSKSDNSSHPQKDDGDNPETIMSSGNVNSSS. A phosphoserine mark is found at S351 and S353. Residues 351–366 show a composition bias toward basic and acidic residues; that stretch reads SRSKSDNSSHPQKDDG. The span at 371-382 shows a compositional bias: polar residues; it reads TIMSSGNVNSSS.

It belongs to the G-protein coupled receptor 1 family. As to quaternary structure, interacts with GNAI1 and GNAI3. Interacts with CD69; this interaction promotes S1PR1 degradation. Post-translationally, S1P-induced endothelial cell migration requires the PKB/AKT1-mediated phosphorylation of the third intracellular loop at the Thr-236 residue. In terms of processing, palmitoylated by ZDHHC5. Palmitoylation is required for targeting to plasma membrane, enabling G(i) coupling.

The protein localises to the cell membrane. It is found in the endosome. Its subcellular location is the membrane raft. Functionally, G-protein coupled receptor for the bioactive lysosphingolipid sphingosine 1-phosphate (S1P) that seems to be coupled to the G(i) subclass of heteromeric G proteins. Signaling leads to the activation of RAC1, SRC, PTK2/FAK1 and MAP kinases. Plays an important role in cell migration, probably via its role in the reorganization of the actin cytoskeleton and the formation of lamellipodia in response to stimuli that increase the activity of the sphingosine kinase SPHK1. Required for normal chemotaxis toward sphingosine 1-phosphate. Required for normal embryonic heart development and normal cardiac morphogenesis. Plays an important role in the regulation of sprouting angiogenesis and vascular maturation. Inhibits sprouting angiogenesis to prevent excessive sprouting during blood vessel development. Required for normal egress of mature T-cells from the thymus into the blood stream and into peripheral lymphoid organs. Plays a role in the migration of osteoclast precursor cells, the regulation of bone mineralization and bone homeostasis. Plays a role in responses to oxidized 1-palmitoyl-2-arachidonoyl-sn-glycero-3-phosphocholine by pulmonary endothelial cells and in the protection against ventilator-induced lung injury. The polypeptide is Sphingosine 1-phosphate receptor 1 (S1PR1) (Bos taurus (Bovine)).